We begin with the raw amino-acid sequence, 221 residues long: Molybdenum cofactor guanylyltransferase (221 aa).

Residues 18-20 (IAG), Lys35, Asn63, Asp81, and Asp112 each bind GTP. Residue Asp112 coordinates Mg(2+).

Belongs to the MobA family. Monomer. The cofactor is Mg(2+).

The protein resides in the cytoplasm. It catalyses the reaction Mo-molybdopterin + GTP + H(+) = Mo-molybdopterin guanine dinucleotide + diphosphate. Its function is as follows. Transfers a GMP moiety from GTP to Mo-molybdopterin (Mo-MPT) cofactor (Moco or molybdenum cofactor) to form Mo-molybdopterin guanine dinucleotide (Mo-MGD) cofactor. The sequence is that of Molybdenum cofactor guanylyltransferase from Brucella abortus (strain S19).